Reading from the N-terminus, the 436-residue chain is 3-ketoacyl-CoA thiolase (436 aa).

C99 functions as the Acyl-thioester intermediate in the catalytic mechanism. Active-site proton acceptor residues include H392 and C422.

Belongs to the thiolase-like superfamily. Thiolase family. In terms of assembly, heterotetramer of two alpha chains (FadJ) and two beta chains (FadI).

Its subcellular location is the cytoplasm. It catalyses the reaction an acyl-CoA + acetyl-CoA = a 3-oxoacyl-CoA + CoA. It participates in lipid metabolism; fatty acid beta-oxidation. In terms of biological role, catalyzes the final step of fatty acid oxidation in which acetyl-CoA is released and the CoA ester of a fatty acid two carbons shorter is formed. The polypeptide is 3-ketoacyl-CoA thiolase (Shigella dysenteriae serotype 1 (strain Sd197)).